A 304-amino-acid chain; its full sequence is PHO85 cyclin-9 (304 aa).

The Cyclin N-terminal domain occupies 19 to 146 (EMIQFLATST…LLEYLNWDVR (128 aa)).

The protein belongs to the cyclin family. PCL1,2 subfamily. In terms of assembly, forms a cyclin-CDK complex with PHO85.

Its function is as follows. M/G1-specific cyclin partner of the cyclin-dependent kinase (CDK) PHO85. May have a role in bud site selection in G1 phase. This Saccharomyces cerevisiae (strain ATCC 204508 / S288c) (Baker's yeast) protein is PHO85 cyclin-9 (PCL9).